A 545-amino-acid polypeptide reads, in one-letter code: CTP synthase (545 aa).

The tract at residues 1-266 is amidoligase domain; that stretch reads MTTRYIFVTG…DDLVVKRFGL (266 aa). Ser14 is a CTP binding site. Ser14 serves as a coordination point for UTP. Residues 15 to 20 and Asp72 each bind ATP; that span reads SLGKGI. Residues Asp72 and Glu140 each contribute to the Mg(2+) site. Residues 147–149, 187–192, and Lys223 each bind CTP; these read DIE and KTKPTQ. UTP contacts are provided by residues 187 to 192 and Lys223; that span reads KTKPTQ. Residue 239-241 coordinates ATP; that stretch reads KDV. Positions 291–542 constitute a Glutamine amidotransferase type-1 domain; sequence VIGMVGKYIE…IAAASAHQKR (252 aa). An L-glutamine-binding site is contributed by Gly352. The active-site Nucleophile; for glutamine hydrolysis is Cys379. Residues 380–383, Glu403, and Arg470 contribute to the L-glutamine site; that span reads LGMQ. Residues His515 and Glu517 contribute to the active site.

Belongs to the CTP synthase family. As to quaternary structure, homotetramer.

It carries out the reaction UTP + L-glutamine + ATP + H2O = CTP + L-glutamate + ADP + phosphate + 2 H(+). The enzyme catalyses L-glutamine + H2O = L-glutamate + NH4(+). The catalysed reaction is UTP + NH4(+) + ATP = CTP + ADP + phosphate + 2 H(+). Its pathway is pyrimidine metabolism; CTP biosynthesis via de novo pathway; CTP from UDP: step 2/2. Allosterically activated by GTP, when glutamine is the substrate; GTP has no effect on the reaction when ammonia is the substrate. The allosteric effector GTP functions by stabilizing the protein conformation that binds the tetrahedral intermediate(s) formed during glutamine hydrolysis. Inhibited by the product CTP, via allosteric rather than competitive inhibition. Functionally, catalyzes the ATP-dependent amination of UTP to CTP with either L-glutamine or ammonia as the source of nitrogen. Regulates intracellular CTP levels through interactions with the four ribonucleotide triphosphates. This chain is CTP synthase, found in Shewanella baltica (strain OS223).